The following is a 193-amino-acid chain: Ion-translocating oxidoreductase complex subunit A (193 aa).

Helical transmembrane passes span 4-24 (FFFI…KFLG), 39-59 (IGMG…SWMV), 71-91 (FLRI…IEVV), 102-122 (ALGI…VALL), 134-154 (LLYG…FAGM), and 167-187 (FAGA…FMGF).

This sequence belongs to the NqrDE/RnfAE family. As to quaternary structure, the complex is composed of six subunits: RnfA, RnfB, RnfC, RnfD, RnfE and RnfG.

Its subcellular location is the cellular chromatophore membrane. Part of a membrane-bound complex that couples electron transfer with translocation of ions across the membrane. This Cereibacter sphaeroides (strain ATCC 17029 / ATH 2.4.9) (Rhodobacter sphaeroides) protein is Ion-translocating oxidoreductase complex subunit A.